The following is a 122-amino-acid chain: Large ribosomal subunit protein uL14 (122 aa).

It belongs to the universal ribosomal protein uL14 family. In terms of assembly, part of the 50S ribosomal subunit. Forms a cluster with proteins L3 and L19. In the 70S ribosome, L14 and L19 interact and together make contacts with the 16S rRNA in bridges B5 and B8.

Functionally, binds to 23S rRNA. Forms part of two intersubunit bridges in the 70S ribosome. This chain is Large ribosomal subunit protein uL14, found in Hahella chejuensis (strain KCTC 2396).